Here is a 315-residue protein sequence, read N- to C-terminus: Endolytic peptidoglycan transglycosylase RlpA (315 aa).

Positions 1-19 (MGLALEKVCFLGVIFLISA) are cleaved as a signal peptide. Residue C20 is the site of N-palmitoyl cysteine attachment. Residue C20 is the site of S-diacylglycerol cysteine attachment. Residues 68–79 (SDSQDSNTKDQP) show a composition bias toward basic and acidic residues. The interval 68-92 (SDSQDSNTKDQPLDNGMRDSSSIQR) is disordered. The 74-residue stretch at 242–315 (SVSGGKFSLQ…YNQNAVLTRE (74 aa)) folds into the SPOR domain.

It belongs to the RlpA family.

The protein localises to the cell membrane. Lytic transglycosylase with a strong preference for naked glycan strands that lack stem peptides. The sequence is that of Endolytic peptidoglycan transglycosylase RlpA from Helicobacter pylori (strain ATCC 700392 / 26695) (Campylobacter pylori).